Reading from the N-terminus, the 838-residue chain is Collagen alpha-2(I) chain (838 aa).

The tract at residues 1–838 is disordered; the sequence is GPMGIMGPRG…GTVGPAGIRS (838 aa). Low complexity predominate over residues 11 to 38; it reads FQGPAGEPGEPGQTGPAGARGPAGPPGK. The segment covering 39–53 has biased composition (basic and acidic residues); it reads AGEDGHPGKPGRPGE. Low complexity-rich tracts occupy residues 101–122, 137–147, 215–236, and 329–344; these read SRGS…SAGP, PVGNTGPAGPA, NGES…RGIP, and AGNR…NGAQ. The segment covering 351-360 has biased composition (gly residues); it reads GVQGGKGEQG. Low complexity-rich tracts occupy residues 407-424 and 436-446; these read PGES…SRGP and EPGVVGAPGTA. Gly residues predominate over residues 447 to 456; sequence GPAGSGGIPG. 3 stretches are compositionally biased toward low complexity: residues 479–523, 530–550, and 568–581; these read VGTT…PRGT, VGPA…QPGA, and SAGP…PGPA. A compositionally biased stretch (gly residues) spans 582–591; that stretch reads GSRGDGGPPG. Residues 593 to 602 show a composition bias toward low complexity; sequence TGFPGAAGRT. The span at 633-642 shows a compositional bias: gly residues; sequence GETGAGGPPG. Residues 649–689 show a composition bias toward low complexity; sequence TAGPQGIIGAPGIIGIPGSRGIPGVSGSVGEPGPIGISGPP. Gly residues predominate over residues 693-702; the sequence is GPSGGVGNPG. Low complexity-rich tracts occupy residues 703-718, 736-758, and 766-781; these read VNGA…NPGN, YAGN…VGPA, and EPGP…AIGP.

This sequence belongs to the fibrillar collagen family. As to quaternary structure, trimers of one alpha 2(I) and two alpha 1(I) chains. Interacts (via C-terminus) with TMEM131 (via PapD-L domain); the interaction is direct and is involved in assembly and TRAPPIII ER-to-Golgi transport complex-dependent secretion of collagen. In terms of processing, prolines at the third position of the tripeptide repeating unit (G-X-Y) are hydroxylated in some or all of the chains. Forms the fibrils of tendon, ligaments and bones. In bones, the fibrils are mineralized with calcium hydroxyapatite.

Its subcellular location is the secreted. The protein resides in the extracellular space. It is found in the extracellular matrix. Functionally, type I collagen is a member of group I collagen (fibrillar forming collagen). The protein is Collagen alpha-2(I) chain of Cyclopes didactylus (Silky anteater).